Reading from the N-terminus, the 417-residue chain is Ribonuclease T2-like (417 aa).

The N-terminal stretch at 1 to 22 (MSSISGFLGAIPGAQQILQTMA) is a signal peptide. Cystine bridges form between Cys-45/Cys-63, Cys-52/Cys-99, Cys-62/Cys-165, Cys-107/Cys-157, and Cys-229/Cys-264. Residue His-92 is part of the active site. An N-linked (GlcNAc...) asparagine glycan is attached at Asn-115. Catalysis depends on residues Glu-150 and His-154. A disordered region spans residues 274–296 (KTPNKDPGHGHEPTKTRHPHGPT). Over residues 276-288 (PNKDPGHGHEPTK) the composition is skewed to basic and acidic residues. Asn-383 carries an N-linked (GlcNAc...) asparagine glycan.

The protein belongs to the RNase T2 family.

Its subcellular location is the vacuole lumen. The protein localises to the cytoplasm. It carries out the reaction a ribonucleotidyl-ribonucleotide-RNA + H2O = a 3'-end 3'-phospho-ribonucleotide-RNA + a 5'-end dephospho-ribonucleoside-RNA + H(+). In terms of biological role, rnase which modulates cell survival under stress conditions. Released from the vacuole to the cytoplasm during stress to promote tRNA and rRNA cleavage and to activate separately a downstream pathway that promotes cell death. Involved in cell size, vacuolar morphology and growth at high temperatures and high salt concentration. The polypeptide is Ribonuclease T2-like (rny1) (Emericella nidulans (strain FGSC A4 / ATCC 38163 / CBS 112.46 / NRRL 194 / M139) (Aspergillus nidulans)).